Here is a 284-residue protein sequence, read N- to C-terminus: Avenin-like b9 (284 aa).

The first 18 residues, 1–18 (MKVFILALLALAATTAIA), serve as a signal peptide directing secretion.

Belongs to the prolamin family. In terms of processing, contains disulfide bonds.

Seed storage protein. Might be integrated via inter-chain disulfide bonds within the glutenin polymer. The polypeptide is Avenin-like b9 (Triticum aestivum (Wheat)).